The chain runs to 395 residues: MHC class I-like protein MILL1 (395 aa).

The first 32 residues, 1–32 (MLLSRNLRALAAIHLWIVYLLLEDLLGTCAEG), serve as a signal peptide directing secretion. The tract at residues 57–148 (AVAEPHTLRY…ITAQNGQNTD (92 aa)) is alpha-1. N-linked (GlcNAc...) asparagine glycosylation is found at N98, N163, and N199. The tract at residues 149 to 240 (LHILQATFGC…SLRNGLLNTG (92 aa)) is alpha-2. Disulfide bonds link C158/C221 and C260/C317. An alpha-3 region spans residues 241–337 (FPKVIVTFRN…EPAATEAPVY (97 aa)). The Ig-like C1-type domain maps to 242-333 (PKVIVTFRNY…HNINEPAATE (92 aa)). The tract at residues 332-352 (TEAPVYGARREQPPTSGVGSR) is disordered. A connecting peptide region spans residues 338 to 368 (GARREQPPTSGVGSRVGKSLWSAMTTALVVI). The GPI-anchor amidated serine moiety is linked to residue S369. Residues 370-395 (WTLSQKLMGPLLWFCSGGFCSFLQCW) constitute a propeptide, removed in mature form.

The protein belongs to the MHC class I family. In terms of assembly, heterodimer with B2M. N-glycosylated. Expressed in stomach, intestine, uterus, skeletal muscle and heart.

The protein localises to the cell membrane. The polypeptide is MHC class I-like protein MILL1 (Mus musculus (Mouse)).